The sequence spans 59 residues: Large ribosomal subunit protein bL32 (59 aa).

The interval 1–59 (MAVQQNRKTRSKRGMRRSHDALSAAALSTDATTGEVHRRHHVSPDGFYRGKQVVEARDE) is disordered. The segment covering 7-16 (RKTRSKRGMR) has biased composition (basic residues). The segment covering 21–33 (ALSAAALSTDATT) has biased composition (low complexity).

It belongs to the bacterial ribosomal protein bL32 family.

The protein is Large ribosomal subunit protein bL32 of Marinobacter nauticus (strain ATCC 700491 / DSM 11845 / VT8) (Marinobacter aquaeolei).